The primary structure comprises 1522 residues: MKAVRNLLIYIFSTYLLVMFGFNAAQDFWCSTLVKGVIYGSYSVSEMFPKNFTNCTWTLENPDPTKYSIYLKFSKKDLSCSNFSLLAYQFDHFSHEKIKDLLRKNHSIMQLCSSKNAFVFLQYDKNFIQIRRVFPTDFPGLQKKVEEDQKSFFEFLVLNKVSPSQFGCHVLCTWLESCLKSENGRTESCGIMYTKCTCPQHLGEWGIDDQSLVLLNNVVLPLNEQTEGCLTQELQTTQVCNLTREAKRPPKEEFGMMGDHTIKSQRPRSVHEKRVPQEQADAAKFMAQTGESGVEEWSQWSACSVTCGQGSQVRTRTCVSPYGTHCSGPLRESRVCNNTALCPVHGVWEEWSPWSLCSFTCGRGQRTRTRSCTPPQYGGRPCEGPETHHKPCNIALCPVDGQWQEWSSWSHCSVTCSNGTQQRSRQCTAAAHGGSECRGPWAESRECYNPECTANGQWNQWGHWSGCSKSCDGGWERRMRTCQGAAVTGQQCEGTGEEVRRCSEQRCPAPYEICPEDYLISMVWKRTPAGDLAFNQCPLNATGTTSRRCSLSLHGVASWEQPSFARCISNEYRHLQHSIKEHLAKGQRMLAGDGMSQVTKTLLDLTQRKNFYAGDLLVSVEILRNVTDTFKRASYIPASDGVQNFFQIVSNLLDEENKEKWEDAQQIYPGSIELMQVIEDFIHIVGMGMMDFQNSYLMTGNVVASIQKLPAASVLTDINFPMKGRKGMVDWARNSEDRVVIPKSIFTPVSSKELDESSVFVLGAVLYKNLDLILPTLRNYTVVNSKVIVVTIRPEPKTTDSFLEIELAHLANGTLNPYCVLWDDSKSNESLGTWSTQGCKTVLTDASHTKCLCDRLSTFAILAQQPREIVMESSGTPSVTLIVGSGLSCLALITLAVVYAALWRYIRSERSIILINFCLSIISSNILILVGQTQTHNKSICTTTTAFLHFFFLASFCWVLTEAWQSYMAVTGKIRTRLIRKRFLCLGWGLPALVVATSVGFTRTKGYGTDHYCWLSLEGGLLYAFVGPAAAVVLVNMVIGILVFNKLVSRDGILDKKLKHRAGQMSEPHSGLTLKCAKCGVVSTTALSATTASNAMASLWSSCVVLPLLALTWMSAVLAMTDKRSILFQILFAVFDSLQGFVIVMVHCILRREVQDAFRCRLRNCQDPINADSSSSFPNGHAQIMTDFEKDVDIACRSVLHKDIGPCRAATITGTLSRISLNDDEEEKGTNPEGLSYSTLPGNVISKVIIQQPTGLHMPMSMNELSNPCLKKENTELRRTVYLCTDDNLRGADMDIVHPQERMMESDYIVMPRSSVSTQPSMKEESKMNIGMETLPHERLLHYKVNPEFNMNPPVMDQFNMNLDQHLAPQEHMQNLPFEPRTAVKNFMASELDDNVGLSRSETGSTISMSSLERRKSRYSDLDFEKVMHTRKRHMELFQELNQKFQTLDRFRDIPNTSSMENPAPNKNPWDTFKPPSEYQHYTTINVLDTEAKDTLELRPAEWEKCLNLPLDVQEGDFQTEV.

The signal sequence occupies residues 1–25 (MKAVRNLLIYIFSTYLLVMFGFNAA). At 26 to 880 (QDFWCSTLVK…MESSGTPSVT (855 aa)) the chain is on the extracellular side. The CUB domain occupies 30–159 (CSTLVKGVIY…KSFFEFLVLN (130 aa)). Residues N51, N54, N82, N105, and N241 are each glycosylated (N-linked (GlcNAc...) asparagine). 4 consecutive TSP type-1 domains span residues 291–343 (ESGV…ALCP), 345–398 (HGVW…ALCP), 400–453 (DGQW…PECT), and 455–508 (NGQW…QRCP). 14 disulfide bridges follow: C303–C336, C307–C342, C318–C326, C357–C392, C361–C397, C372–C382, C412–C447, C416–C452, C427–C437, C467–C502, C471–C507, C482–C492, C514–C549, and C537–C567. N-linked (GlcNAc...) asparagine glycosylation occurs at N337. Residue N418 is glycosylated (N-linked (GlcNAc...) asparagine). The N-linked (GlcNAc...) asparagine glycan is linked to N540. S619 is subject to Phosphoserine. N-linked (GlcNAc...) asparagine glycosylation is found at N625, N779, N812, and N828. The GAIN-B domain maps to 693 to 869 (QNSYLMTGNV…AILAQQPREI (177 aa)). Disulfide bonds link C819/C851 and C839/C853. The GPS stretch occupies residues 819–869 (CVLWDDSKSNESLGTWSTQGCKTVLTDASHTKCLCDRLSTFAILAQQPREI). Residues 881-901 (LIVGSGLSCLALITLAVVYAA) form a helical membrane-spanning segment. Residues 902-910 (LWRYIRSER) lie on the Cytoplasmic side of the membrane. Residues 911–931 (SIILINFCLSIISSNILILVG) traverse the membrane as a helical segment. At 932-939 (QTQTHNKS) the chain is on the extracellular side. N-linked (GlcNAc...) asparagine glycosylation occurs at N937. Residues 940 to 960 (ICTTTTAFLHFFFLASFCWVL) traverse the membrane as a helical segment. The Cytoplasmic segment spans residues 961 to 981 (TEAWQSYMAVTGKIRTRLIRK). Residues 982–1002 (RFLCLGWGLPALVVATSVGFT) traverse the membrane as a helical segment. The Extracellular portion of the chain corresponds to 1003 to 1023 (RTKGYGTDHYCWLSLEGGLLY). Residues 1024-1044 (AFVGPAAAVVLVNMVIGILVF) traverse the membrane as a helical segment. Over 1045-1098 (NKLVSRDGILDKKLKHRAGQMSEPHSGLTLKCAKCGVVSTTALSATTASNAMAS) the chain is Cytoplasmic. Residues 1099 to 1119 (LWSSCVVLPLLALTWMSAVLA) traverse the membrane as a helical segment. The Extracellular segment spans residues 1120–1125 (MTDKRS). A helical transmembrane segment spans residues 1126–1146 (ILFQILFAVFDSLQGFVIVMV). Topologically, residues 1147–1522 (HCILRREVQD…VQEGDFQTEV (376 aa)) are cytoplasmic. 2 positions are modified to phosphoserine: S1220 and S1411.

Belongs to the G-protein coupled receptor 2 family. Adhesion G-protein coupled receptor (ADGR) subfamily. Forms a heterodimer, consisting of a large extracellular region non-covalently linked to a seven-transmembrane moiety. Interacts (via its TSRs) with C1QL1, C1QL2, C1QL3 and C1QL4. Interacts via (C-terminus) with ELMO1, ELMO2 and ELMO3. The endogenous protein is proteolytically cleaved into 2 subunits, an extracellular subunit and a seven-transmembrane subunit. As to expression, brain-specific expression.

It is found in the cell membrane. In terms of biological role, receptor that plays a role in the regulation of synaptogenesis and dendritic spine formation at least partly via interaction with ELMO1 and RAC1 activity. Promotes myoblast fusion through ELMO/DOCK1. In Mus musculus (Mouse), this protein is Adhesion G protein-coupled receptor B3 (Adgrb3).